Reading from the N-terminus, the 76-residue chain is Putative UPF0377 protein YGL260W (76 aa).

This sequence belongs to the UPF0377 family.

The sequence is that of Putative UPF0377 protein YGL260W from Saccharomyces cerevisiae (strain ATCC 204508 / S288c) (Baker's yeast).